A 200-amino-acid chain; its full sequence is 3-isopropylmalate dehydratase small subunit (200 aa).

The protein belongs to the LeuD family. LeuD type 1 subfamily. Heterodimer of LeuC and LeuD.

The enzyme catalyses (2R,3S)-3-isopropylmalate = (2S)-2-isopropylmalate. It participates in amino-acid biosynthesis; L-leucine biosynthesis; L-leucine from 3-methyl-2-oxobutanoate: step 2/4. Functionally, catalyzes the isomerization between 2-isopropylmalate and 3-isopropylmalate, via the formation of 2-isopropylmaleate. The chain is 3-isopropylmalate dehydratase small subunit from Campylobacter jejuni subsp. jejuni serotype O:23/36 (strain 81-176).